The sequence spans 239 residues: MLVEVLLNTPAQLSLPLYLPDDETFASFYPGENPSLLAAIQSAVHQPHGSYIYFWSREGGGRSHLLHAACAELSQQGEAVGYVPLDKRAYFIPEVLEGMEQLALVCIDNIECIAGDEQWEMAMFNLYNRIVETGRTRLLITGDRPPRQLNLGLPDLASRLDWGQIYKLQPLSDDEKLQALQLRAKLRGFELPEDVGRFLLKRLDREMRTLFMTLDQLDRASITAQRKLTIPFVKEILSL.

Belongs to the DnaA family. HdA subfamily. The active form seems to be an ADP-bound monomer. Forms the RIDA complex (regulatory inactivation of DnaA) of ATP-DnaA, ADP-Hda and the DNA-loaded beta sliding clamp (dnaN).

In terms of biological role, mediates the interaction of DNA replication initiator protein DnaA with DNA polymerase subunit beta sliding clamp (dnaN). Stimulates hydrolysis of ATP-DnaA to ADP-DnaA, rendering DnaA inactive for reinitiation, a process called regulatory inhibition of DnaA or RIDA. This is DnaA regulatory inactivator Hda from Yersinia pseudotuberculosis serotype O:1b (strain IP 31758).